Here is a 311-residue protein sequence, read N- to C-terminus: Methionyl-tRNA formyltransferase (311 aa).

110 to 113 (SLLP) lines the (6S)-5,6,7,8-tetrahydrofolate pocket.

This sequence belongs to the Fmt family.

It carries out the reaction L-methionyl-tRNA(fMet) + (6R)-10-formyltetrahydrofolate = N-formyl-L-methionyl-tRNA(fMet) + (6S)-5,6,7,8-tetrahydrofolate + H(+). Its function is as follows. Attaches a formyl group to the free amino group of methionyl-tRNA(fMet). The formyl group appears to play a dual role in the initiator identity of N-formylmethionyl-tRNA by promoting its recognition by IF2 and preventing the misappropriation of this tRNA by the elongation apparatus. The polypeptide is Methionyl-tRNA formyltransferase (Streptococcus pyogenes serotype M12 (strain MGAS2096)).